A 396-amino-acid polypeptide reads, in one-letter code: Acetate kinase (396 aa).

Residue Asn-8 participates in Mg(2+) binding. An ATP-binding site is contributed by Lys-15. Arg-90 is a binding site for substrate. Asp-147 functions as the Proton donor/acceptor in the catalytic mechanism. Residues 207 to 211, 283 to 285, and 330 to 334 contribute to the ATP site; these read HLGSG, DMR, and GIGEN. Glu-384 contributes to the Mg(2+) binding site.

It belongs to the acetokinase family. In terms of assembly, homodimer. Requires Mg(2+) as cofactor. The cofactor is Mn(2+).

The protein resides in the cytoplasm. The catalysed reaction is acetate + ATP = acetyl phosphate + ADP. It functions in the pathway metabolic intermediate biosynthesis; acetyl-CoA biosynthesis; acetyl-CoA from acetate: step 1/2. In terms of biological role, catalyzes the formation of acetyl phosphate from acetate and ATP. Can also catalyze the reverse reaction. The chain is Acetate kinase from Lacticaseibacillus paracasei (strain ATCC 334 / BCRC 17002 / CCUG 31169 / CIP 107868 / KCTC 3260 / NRRL B-441) (Lactobacillus paracasei).